Here is a 253-residue protein sequence, read N- to C-terminus: 5'-nucleotidase SurE (253 aa).

The a divalent metal cation site is built by aspartate 8, aspartate 9, serine 39, and asparagine 97.

This sequence belongs to the SurE nucleotidase family. The cofactor is a divalent metal cation.

It localises to the cytoplasm. It catalyses the reaction a ribonucleoside 5'-phosphate + H2O = a ribonucleoside + phosphate. In terms of biological role, nucleotidase that shows phosphatase activity on nucleoside 5'-monophosphates. This Aeromonas hydrophila subsp. hydrophila (strain ATCC 7966 / DSM 30187 / BCRC 13018 / CCUG 14551 / JCM 1027 / KCTC 2358 / NCIMB 9240 / NCTC 8049) protein is 5'-nucleotidase SurE.